The sequence spans 379 residues: Alcohol dehydrogenase 1 (379 aa).

Cys47, Thr49, His69, Cys99, Cys102, Cys105, Cys113, and Cys177 together coordinate Zn(2+). Residues Thr49 and His69 each coordinate an alcohol. Thr49 provides a ligand contact to NAD(+). NAD(+) is bound by residues 202–207, Asp226, Arg231, Thr272, Val295, 295–297, Phe322, and Arg372; these read GLGAVG and VGV.

The protein belongs to the zinc-containing alcohol dehydrogenase family. In terms of assembly, homodimer. Requires Zn(2+) as cofactor.

The protein resides in the cytoplasm. It catalyses the reaction a primary alcohol + NAD(+) = an aldehyde + NADH + H(+). The catalysed reaction is a secondary alcohol + NAD(+) = a ketone + NADH + H(+). The polypeptide is Alcohol dehydrogenase 1 (ADH1) (Oryza sativa subsp. indica (Rice)).